Consider the following 198-residue polypeptide: Sortase D (198 aa).

The helical transmembrane segment at 7 to 25 (LFIIAAGLVIAGYGGFKLI) threads the bilayer. Basic and acidic residues predominate over residues 36–46 (KEAKLAAKKPQ). A disordered region spans residues 36–67 (KEAKLAAKKPQEASGTKNSTDQAKNKASFKPE). Over residues 48-57 (ASGTKNSTDQ) the composition is skewed to polar residues. His119 (proton donor/acceptor) is an active-site residue. Cys177 serves as the catalytic Acyl-thioester intermediate.

Belongs to the bacterial sortase family. Class D subfamily.

It is found in the cell membrane. Its function is as follows. Transpeptidase that anchors surface proteins to the cell wall. Recognizes and modifies its substrate by proteolytic cleavage of a C-terminal sorting signal. Following cleavage, a covalent intermediate is formed via a thioester bond between the sortase and its substrate, which is then transferred and covalently attached to the cell wall. This sortase recognizes a Leu-Pro-Asp-Thr-Ser/Ala (LPDTS/A) motif. It has two substrates, YhcR and YfkN. In Bacillus subtilis (strain 168), this protein is Sortase D.